The primary structure comprises 205 residues: GTP cyclohydrolase-2 (205 aa).

A GTP-binding site is contributed by 49–53 (RIHSE). Zn(2+)-binding residues include cysteine 54, cysteine 65, and cysteine 67. GTP is bound by residues glutamine 70, 92–94 (EGR), and threonine 114. The Proton acceptor role is filled by aspartate 126. Arginine 128 (nucleophile) is an active-site residue. GTP-binding residues include threonine 149 and lysine 154.

Belongs to the GTP cyclohydrolase II family. Zn(2+) serves as cofactor.

It carries out the reaction GTP + 4 H2O = 2,5-diamino-6-hydroxy-4-(5-phosphoribosylamino)-pyrimidine + formate + 2 phosphate + 3 H(+). It functions in the pathway cofactor biosynthesis; riboflavin biosynthesis; 5-amino-6-(D-ribitylamino)uracil from GTP: step 1/4. Functionally, catalyzes the conversion of GTP to 2,5-diamino-6-ribosylamino-4(3H)-pyrimidinone 5'-phosphate (DARP), formate and pyrophosphate. The chain is GTP cyclohydrolase-2 from Shewanella denitrificans (strain OS217 / ATCC BAA-1090 / DSM 15013).